The sequence spans 195 residues: dTTP/UTP pyrophosphatase (195 aa).

Catalysis depends on Asp70, which acts as the Proton acceptor.

Belongs to the Maf family. YhdE subfamily. It depends on a divalent metal cation as a cofactor.

It is found in the cytoplasm. The catalysed reaction is dTTP + H2O = dTMP + diphosphate + H(+). It catalyses the reaction UTP + H2O = UMP + diphosphate + H(+). Nucleoside triphosphate pyrophosphatase that hydrolyzes dTTP and UTP. May have a dual role in cell division arrest and in preventing the incorporation of modified nucleotides into cellular nucleic acids. The sequence is that of dTTP/UTP pyrophosphatase from Photorhabdus laumondii subsp. laumondii (strain DSM 15139 / CIP 105565 / TT01) (Photorhabdus luminescens subsp. laumondii).